Here is a 253-residue protein sequence, read N- to C-terminus: Triosephosphate isomerase (253 aa).

Asn8–Lys10 contacts substrate. His93 acts as the Electrophile in catalysis. Glu165 serves as the catalytic Proton acceptor. Residues Gly171, Ser210, and Gly231 to Gly232 each bind substrate.

The protein belongs to the triosephosphate isomerase family. As to quaternary structure, homodimer.

It localises to the cytoplasm. The catalysed reaction is D-glyceraldehyde 3-phosphate = dihydroxyacetone phosphate. It functions in the pathway carbohydrate biosynthesis; gluconeogenesis. The protein operates within carbohydrate degradation; glycolysis; D-glyceraldehyde 3-phosphate from glycerone phosphate: step 1/1. In terms of biological role, involved in the gluconeogenesis. Catalyzes stereospecifically the conversion of dihydroxyacetone phosphate (DHAP) to D-glyceraldehyde-3-phosphate (G3P). In Francisella tularensis subsp. holarctica (strain FTNF002-00 / FTA), this protein is Triosephosphate isomerase.